The chain runs to 510 residues: NAD(P)H-quinone oxidoreductase subunit 2 A, chloroplastic (510 aa).

Transmembrane regions (helical) follow at residues 24-44 (LLLF…GLIL), 57-77 (MPWL…ALLF), 99-119 (IFQF…VEYI), 124-144 (MAIT…MFLC), 149-169 (LITI…LSGY), 183-203 (YLLM…WLYG), 227-247 (PGIS…LSPA), 295-315 (WHLL…LIAI), 323-343 (MLAY…IVGD), 354-374 (YMLF…LFGL), 395-415 (ALSL…AGFF), 418-438 (LHLF…IGLL), and 482-502 (LSMI…SPII).

The protein belongs to the complex I subunit 2 family. As to quaternary structure, NDH is composed of at least 16 different subunits, 5 of which are encoded in the nucleus.

It is found in the plastid. It localises to the chloroplast thylakoid membrane. It carries out the reaction a plastoquinone + NADH + (n+1) H(+)(in) = a plastoquinol + NAD(+) + n H(+)(out). It catalyses the reaction a plastoquinone + NADPH + (n+1) H(+)(in) = a plastoquinol + NADP(+) + n H(+)(out). In terms of biological role, NDH shuttles electrons from NAD(P)H:plastoquinone, via FMN and iron-sulfur (Fe-S) centers, to quinones in the photosynthetic chain and possibly in a chloroplast respiratory chain. The immediate electron acceptor for the enzyme in this species is believed to be plastoquinone. Couples the redox reaction to proton translocation, and thus conserves the redox energy in a proton gradient. The sequence is that of NAD(P)H-quinone oxidoreductase subunit 2 A, chloroplastic from Populus trichocarpa (Western balsam poplar).